The sequence spans 539 residues: Chaperonin GroEL (539 aa).

Residues 30 to 33 (TLGP), K51, 87 to 91 (DGTTT), G415, 479 to 481 (NAA), and D495 each bind ATP.

This sequence belongs to the chaperonin (HSP60) family. In terms of assembly, forms a cylinder of 14 subunits composed of two heptameric rings stacked back-to-back. Interacts with the co-chaperonin GroES.

It is found in the cytoplasm. The enzyme catalyses ATP + H2O + a folded polypeptide = ADP + phosphate + an unfolded polypeptide.. Functionally, together with its co-chaperonin GroES, plays an essential role in assisting protein folding. The GroEL-GroES system forms a nano-cage that allows encapsulation of the non-native substrate proteins and provides a physical environment optimized to promote and accelerate protein folding. The polypeptide is Chaperonin GroEL (Kluyvera intermedia (Enterobacter intermedius)).